The primary structure comprises 193 residues: Endoribonuclease YbeY (193 aa).

Positions 109, 113, and 119 each coordinate Zn(2+). The interval 143–193 (GAALREGRREGRAGEAKDRWTRSPTSISTPSRSGSTARGSRAKTSRAGSRT) is disordered. Residues 147 to 163 (REGRREGRAGEAKDRWT) show a composition bias toward basic and acidic residues. Residues 164-181 (RSPTSISTPSRSGSTARG) show a composition bias toward low complexity.

Belongs to the endoribonuclease YbeY family. The cofactor is Zn(2+).

It localises to the cytoplasm. Functionally, single strand-specific metallo-endoribonuclease involved in late-stage 70S ribosome quality control and in maturation of the 3' terminus of the 16S rRNA. In Anaeromyxobacter dehalogenans (strain 2CP-C), this protein is Endoribonuclease YbeY.